A 400-amino-acid polypeptide reads, in one-letter code: MALEKIITAPKYKNFTINFGPQHPAAHGVLRLVLEMNGEVVQRSDPHIGLLHRGTEKLIEYKNYLQALPYFDRLDYVSMMCQEHAYSLAVEKLLNISKDIPLRAQYIRVLFSEITRILNHLLAVTCHAMDVGALTPFLWGFEEREKLMEFYERVSGARMHAAYIRPGGVALDLPLGLCEDIYKFSKQFASRIDEIEEMLTSNRIWKQRLVDVGVVSAEQALDWSFSGVLLRGSGIAWDLRKTQPYEVYDRMKFNIPVGTRGDCYDRYLIRVQEMRESLRIVMQTINEMSKGIIRLDDRKITPPTRDQMKQSMESLIHHFKFYTGGFVVPAGETYTAVEAPKGEFGVYLVSNGTSKPYRCKIRAPGFAHLQGLDFMARNHMLADVVTIIGTQDIVFGEVDR.

This sequence belongs to the complex I 49 kDa subunit family.

The protein resides in the mitochondrion. It catalyses the reaction a ubiquinone + NADH + 5 H(+)(in) = a ubiquinol + NAD(+) + 4 H(+)(out). Functionally, core subunit of the mitochondrial membrane respiratory chain NADH dehydrogenase (Complex I) that is believed to belong to the minimal assembly required for catalysis. Complex I functions in the transfer of electrons from NADH to the respiratory chain. The immediate electron acceptor for the enzyme is believed to be ubiquinone. Component of the iron-sulfur (IP) fragment of the enzyme. Component of the iron-sulfur (IP) fragment of the enzyme. The protein is NADH-ubiquinone oxidoreductase 49 kDa subunit (NAD7) of Prototheca wickerhamii.